We begin with the raw amino-acid sequence, 342 residues long: Polygalacturonase inhibitor 3 (342 aa).

The signal sequence occupies residues 1-29; the sequence is MTQFNIPVTMSSSLSIILVILVSLRTALS. Disulfide bonds link Cys-32/Cys-62 and Cys-63/Cys-72. Asn-64 is a glycosylation site (N-linked (GlcNAc...) asparagine). 10 LRR repeats span residues 82 to 107, 108 to 132, 133 to 156, 157 to 180, 181 to 205, 206 to 228, 229 to 252, 253 to 275, 276 to 299, and 300 to 319; these read NNLD…LPYL, NFLY…LTQL, HYLY…IKTL, VTLD…LPNL, VGIT…SKLF, TSMT…NLNL, AFVD…DKNT, QKIH…SKNL, NGLD…LKFL, and HSLN…GGNL. A glycan (N-linked (GlcNAc...) asparagine) is linked at Asn-141. An N-linked (GlcNAc...) asparagine glycan is attached at Asn-303. Intrachain disulfides connect Cys-310-Cys-332 and Cys-334-Cys-341.

The protein belongs to the polygalacturonase-inhibiting protein family. Found in suspension-cultured cells and to a lesser extent in hypocotyls, leaves and flowers.

The protein resides in the secreted. It is found in the cell wall. Its subcellular location is the membrane. Functionally, inhibitor of fungal polygalacturonase. It is an important factor for plant resistance to phytopathogenic fungi. The sequence is that of Polygalacturonase inhibitor 3 (PGIP3) from Phaseolus vulgaris (Kidney bean).